Reading from the N-terminus, the 195-residue chain is MAKLALAATSGKSCKILLGLRLLAFSATLSAAIVMGLNKETETFVVGKVGNTPIKATFTAKFDHTPAFVFFVVANAMVSFHNLLMIALQIFGGKMEFTGFRLLSVAILDMLNVTLISAAANAAAFMAEVGKNGNKHARWDKICDRFATYCDHGAGALIAAFAGVILMLIISAASISRLAQQNKCCSTTASPSVVP.

The Cytoplasmic segment spans residues methionine 1–lysine 15. Residues isoleucine 16–glycine 36 form a helical membrane-spanning segment. Over leucine 37–alanine 67 the chain is Extracellular. The helical transmembrane segment at phenylalanine 68–leucine 88 threads the bilayer. The Cytoplasmic segment spans residues glutamine 89–serine 104. The chain crosses the membrane as a helical span at residues valine 105–phenylalanine 125. The Extracellular segment spans residues methionine 126 to alanine 154. A helical membrane pass occupies residues glycine 155–isoleucine 175. Over serine 176–proline 195 the chain is Cytoplasmic.

It belongs to the Casparian strip membrane proteins (CASP) family. In terms of assembly, homodimer and heterodimers.

It localises to the cell membrane. This Arabidopsis lyrata subsp. lyrata (Lyre-leaved rock-cress) protein is CASP-like protein 1B1.